The sequence spans 251 residues: UPF0309 protein SCO4393 (251 aa).

An SIS domain is found at 36–220 (LADTVQNGGR…AATLADRGIE (185 aa)).

Belongs to the UPF0309 family.

This chain is UPF0309 protein SCO4393, found in Streptomyces coelicolor (strain ATCC BAA-471 / A3(2) / M145).